The sequence spans 559 residues: Urocanate hydratase (559 aa).

NAD(+)-binding positions include 54-55 (GG), Q132, 178-180 (GMG), E198, R203, 244-245 (NA), 265-269 (QTSAH), 275-276 (YL), and Y324. C412 is an active-site residue. G494 contacts NAD(+).

This sequence belongs to the urocanase family. NAD(+) is required as a cofactor.

It is found in the cytoplasm. The catalysed reaction is 4-imidazolone-5-propanoate = trans-urocanate + H2O. It participates in amino-acid degradation; L-histidine degradation into L-glutamate; N-formimidoyl-L-glutamate from L-histidine: step 2/3. In terms of biological role, catalyzes the conversion of urocanate to 4-imidazolone-5-propionate. The chain is Urocanate hydratase from Photorhabdus laumondii subsp. laumondii (strain DSM 15139 / CIP 105565 / TT01) (Photorhabdus luminescens subsp. laumondii).